Reading from the N-terminus, the 333-residue chain is Protein XAP5 CIRCADIAN TIMEKEEPER (333 aa).

Coiled coils occupy residues Ala-12–Gln-43 and Thr-70–Asp-116. The span at Glu-89–Gln-98 shows a compositional bias: basic and acidic residues. Residues Glu-89 to Glu-171 are disordered. The span at Asp-123–Asn-136 shows a compositional bias: acidic residues. The segment covering Pro-160–Glu-171 has biased composition (basic and acidic residues).

The protein belongs to the FAM50 family.

It localises to the nucleus. In terms of biological role, involved in light regulation of the circadian clock and photomorphogenesis. The protein is Protein XAP5 CIRCADIAN TIMEKEEPER (XCT) of Oryza sativa subsp. indica (Rice).